Reading from the N-terminus, the 823-residue chain is Polyadenylation and cleavage factor homolog 11 (823 aa).

A CID domain is found at 3–135; sequence SVESAARDYR…ELDMKINKLD (133 aa). 5 disordered regions span residues 142–176, 188–301, 340–395, 570–643, and 728–755; these read NPQT…STST, SSTP…KTLK, SSAP…LPAP, LPAP…EKRS, and WLTP…VASS. Polar residues-rich tracts occupy residues 157-176 and 188-198; these read APSQ…STST and SSTPGAASASK. A compositionally biased stretch (basic and acidic residues) spans 200–226; that stretch reads VVEKTKSPGTVNKEKQVKKEPKQDPLD. 2 stretches are compositionally biased toward low complexity: residues 227 to 242 and 342 to 353; these read KLLP…SSPA and APPFQHPQQHHP. Residues 374-390 are compositionally biased toward pro residues; that stretch reads PQDPAPIVPVQAPPPQQ. The segment covering 571-581 has biased composition (low complexity); that stretch reads PAPARSPSSPR. Positions 609 to 624 are enriched in polar residues; it reads QPQQNARWGGANKQQN.

The protein is Polyadenylation and cleavage factor homolog 11 (pcf-11) of Caenorhabditis elegans.